Reading from the N-terminus, the 1242-residue chain is Receptor-type adenylate cyclase GRESAG 4.1 (1242 aa).

Over 1–39 (MHWQEGGGRGCVYTHGNCRRNLTARALQALQHVEALTCH) the chain is Cytoplasmic. A helical transmembrane segment spans residues 40-60 (YCVSLLHLLPLLLMWMPPVCA). Topologically, residues 61–862 (DDSAVTVNVL…THTVTDSWNN (802 aa)) are extracellular. N-linked (GlcNAc...) asparagine glycosylation is found at Asn116, Asn289, Asn318, Asn338, Asn401, Asn534, Asn563, Asn603, Asn702, Asn741, and Asn818. The chain crosses the membrane as a helical span at residues 863–883 (FWVCIRLVIIYCPWCVPTHLP). At 884–1242 (AERRNNNRAP…PFYDMHLQEY (359 aa)) the chain is on the cytoplasmic side. In terms of domain architecture, Guanylate cyclase spans 901–1056 (TLIFTDIESS…RTPNMAARTE (156 aa)). Residues Asp906 and Asp949 each coordinate Mg(2+).

It belongs to the adenylyl cyclase class-3 family. Mg(2+) is required as a cofactor.

The protein resides in the membrane. The catalysed reaction is ATP = 3',5'-cyclic AMP + diphosphate. Functionally, could act as a receptor for an unknown ligand. The sequence is that of Receptor-type adenylate cyclase GRESAG 4.1 (GRESAG 4.1) from Trypanosoma brucei brucei.